Consider the following 230-residue polypeptide: Phosphoglycerate mutase-like protein 4 (230 aa).

The active-site Tele-phosphohistidine intermediate is the His21. Glu96 functions as the Proton donor/acceptor in the catalytic mechanism.

The protein belongs to the phosphoglycerate mutase family.

Its function is as follows. May play a role in carbohydrates metabolism. The protein is Phosphoglycerate mutase-like protein 4 of Arabidopsis thaliana (Mouse-ear cress).